Here is a 683-residue protein sequence, read N- to C-terminus: DNA-directed RNA polymerase subunit beta' (683 aa).

Zn(2+)-binding residues include cysteine 69, cysteine 71, cysteine 87, and cysteine 90. Mg(2+) contacts are provided by aspartate 492, aspartate 494, and aspartate 496.

The protein belongs to the RNA polymerase beta' chain family. RpoC1 subfamily. In plastids the minimal PEP RNA polymerase catalytic core is composed of four subunits: alpha, beta, beta', and beta''. When a (nuclear-encoded) sigma factor is associated with the core the holoenzyme is formed, which can initiate transcription. It depends on Mg(2+) as a cofactor. Zn(2+) serves as cofactor.

It localises to the plastid. It is found in the chloroplast. The enzyme catalyses RNA(n) + a ribonucleoside 5'-triphosphate = RNA(n+1) + diphosphate. In terms of biological role, DNA-dependent RNA polymerase catalyzes the transcription of DNA into RNA using the four ribonucleoside triphosphates as substrates. The protein is DNA-directed RNA polymerase subunit beta' of Coffea arabica (Arabian coffee).